Here is an 84-residue protein sequence, read N- to C-terminus: Sulfur carrier protein TusA (84 aa).

The active-site Cysteine persulfide intermediate is Cys19.

Belongs to the sulfur carrier protein TusA family. Interacts with IscS.

The protein resides in the cytoplasm. It participates in tRNA modification. Functionally, sulfur carrier protein involved in sulfur trafficking in the cell. Part of a sulfur-relay system required for 2-thiolation during synthesis of 2-thiouridine of the modified wobble base 5-methylaminomethyl-2-thiouridine (mnm(5)s(2)U) in tRNA. Interacts with IscS and stimulates its cysteine desulfurase activity. Accepts an activated sulfur from IscS, which is then transferred to TusD, and thus determines the direction of sulfur flow from IscS to 2-thiouridine formation. Also appears to be involved in sulfur transfer for the biosynthesis of molybdopterin. This Proteus mirabilis (strain HI4320) protein is Sulfur carrier protein TusA.